The primary structure comprises 355 residues: 3-dehydroquinate synthase (355 aa).

NAD(+)-binding positions include 71–76 (EGEASK), 105–109 (GVVGD), 129–130 (TS), Lys142, Lys151, and 169–172 (TLNT). Zn(2+) contacts are provided by Glu184, His246, and His263.

The protein belongs to the sugar phosphate cyclases superfamily. Dehydroquinate synthase family. NAD(+) is required as a cofactor. The cofactor is Co(2+). Zn(2+) serves as cofactor.

The protein resides in the cytoplasm. The catalysed reaction is 7-phospho-2-dehydro-3-deoxy-D-arabino-heptonate = 3-dehydroquinate + phosphate. Its pathway is metabolic intermediate biosynthesis; chorismate biosynthesis; chorismate from D-erythrose 4-phosphate and phosphoenolpyruvate: step 2/7. Catalyzes the conversion of 3-deoxy-D-arabino-heptulosonate 7-phosphate (DAHP) to dehydroquinate (DHQ). The protein is 3-dehydroquinate synthase of Streptococcus mutans serotype c (strain ATCC 700610 / UA159).